The primary structure comprises 708 residues: Homeobox-leucine zipper protein HDG10 (708 aa).

The segment at 1 to 24 (MDSSHNDSSSDEEGIDSNNRRHHS) is disordered. The homeobox DNA-binding region spans 16-75 (DSNNRRHHSNHQVQRLEAFFHECPHPDDSQRRQLGNELNLKHKQIKFWFQNRRTQARIHN). A coiled-coil region spans residues 119-141 (LCNLQKLRTKNVILKTEYERLSS). The interval 162–188 (GPSTYGSTSNNRPASYGSSSNHLPQQS) is disordered. Polar residues predominate over residues 165-188 (TYGSTSNNRPASYGSSSNHLPQQS). The START domain maps to 218–456 (SQLEKNRMFE…LQRMCERLSL (239 aa)).

The protein belongs to the HD-ZIP homeobox family. Class IV subfamily. In terms of assembly, interacts with ANT, BBM and AIL1. As to expression, expressed in exclusively in anthers with highest levels in the tapetum and pollen grains.

The protein localises to the nucleus. Its function is as follows. Probable transcription factor. This chain is Homeobox-leucine zipper protein HDG10, found in Arabidopsis thaliana (Mouse-ear cress).